We begin with the raw amino-acid sequence, 1218 residues long: Probable RNA-dependent RNA polymerase SHL2 (1218 aa).

Belongs to the RdRP family.

It catalyses the reaction RNA(n) + a ribonucleoside 5'-triphosphate = RNA(n+1) + diphosphate. Functionally, involved in the RNA silencing pathway. Probably required for the generation of small interfering RNAs (siRNAs). Regulates shoot apical meristem (SAM) initiation and maintenance and leaf polarization through the trans-acting siRNAS (ta-siRNAs) pathway which probably modulates the expression of the ARF2, ARF3, ARF4, ARF14 and ARF15 genes. This Oryza sativa subsp. japonica (Rice) protein is Probable RNA-dependent RNA polymerase SHL2 (SHL2).